A 218-amino-acid polypeptide reads, in one-letter code: 2-C-methyl-D-erythritol 4-phosphate cytidylyltransferase (218 aa).

Belongs to the IspD/TarI cytidylyltransferase family. IspD subfamily.

It catalyses the reaction 2-C-methyl-D-erythritol 4-phosphate + CTP + H(+) = 4-CDP-2-C-methyl-D-erythritol + diphosphate. It functions in the pathway isoprenoid biosynthesis; isopentenyl diphosphate biosynthesis via DXP pathway; isopentenyl diphosphate from 1-deoxy-D-xylulose 5-phosphate: step 2/6. In terms of biological role, catalyzes the formation of 4-diphosphocytidyl-2-C-methyl-D-erythritol from CTP and 2-C-methyl-D-erythritol 4-phosphate (MEP). In Chlamydia muridarum (strain MoPn / Nigg), this protein is 2-C-methyl-D-erythritol 4-phosphate cytidylyltransferase.